Reading from the N-terminus, the 95-residue chain is F(1)-ATPase inhibitor IF(1), mitochondrial (95 aa).

The N-terminal 25 residues, 1–25 (MLRTTVSKLARPTVSRAFATTSRAL), are a transit peptide targeting the mitochondrion. Disordered stretches follow at residues 20-48 (TTSR…REKA) and 76-95 (LKTL…GERN).

The protein belongs to the ATPase inhibitor family. As to quaternary structure, associates with the mitochondrial small ribosomal subunit (mt-SSU). IF(1) coiled-coil forms a helical bundle with the C-terminal extension of uS17m and also binds to mS27 in the mtSSU tail. Since the C-terminal extension of uS17m stabilizing the IF(1) on the mt-SSU is specific to N.crassa, IF(1) binding might also be specific.

Its subcellular location is the mitochondrion. Its function is as follows. Endogenous F(1)F(0)-ATPase inhibitor limiting ATP depletion when the mitochondrial membrane potential falls below a threshold and the F(1)F(0)-ATP synthase starts hydrolyzing ATP to pump protons out of the mitochondrial matrix. Required to avoid the consumption of cellular ATP when the F(1)F(0)-ATP synthase enzyme acts as an ATP hydrolase. Functions through inserting its N-terminal part into the catalytically active F1-ATPase, thereby blocking its rotational movement and subsequently the ATP hydrolase activity. In Neurospora crassa (strain ATCC 24698 / 74-OR23-1A / CBS 708.71 / DSM 1257 / FGSC 987), this protein is F(1)-ATPase inhibitor IF(1), mitochondrial (inh1).